We begin with the raw amino-acid sequence, 252 residues long: Thiazole synthase (252 aa).

The Schiff-base intermediate with DXP role is filled by lysine 98. 1-deoxy-D-xylulose 5-phosphate is bound by residues glycine 159, 185 to 186 (AG), and 207 to 208 (AT).

This sequence belongs to the ThiG family. In terms of assembly, homotetramer. Forms heterodimers with either ThiH or ThiS.

It is found in the cytoplasm. It catalyses the reaction [ThiS sulfur-carrier protein]-C-terminal-Gly-aminoethanethioate + 2-iminoacetate + 1-deoxy-D-xylulose 5-phosphate = [ThiS sulfur-carrier protein]-C-terminal Gly-Gly + 2-[(2R,5Z)-2-carboxy-4-methylthiazol-5(2H)-ylidene]ethyl phosphate + 2 H2O + H(+). It participates in cofactor biosynthesis; thiamine diphosphate biosynthesis. Functionally, catalyzes the rearrangement of 1-deoxy-D-xylulose 5-phosphate (DXP) to produce the thiazole phosphate moiety of thiamine. Sulfur is provided by the thiocarboxylate moiety of the carrier protein ThiS. In vitro, sulfur can be provided by H(2)S. The chain is Thiazole synthase from Mycolicibacterium smegmatis (strain ATCC 700084 / mc(2)155) (Mycobacterium smegmatis).